Here is a 97-residue protein sequence, read N- to C-terminus: RxLR effector protein PexRD21 (97 aa).

The first 21 residues, 1 to 21, serve as a signal peptide directing secretion; sequence MRLSYILVVVIAVTLQACVCA. Positions 48 to 66 match the RxLR-dEER motif; sequence RLLRGVKKRTAEREVQEER.

The protein belongs to the RxLR effector family.

It is found in the secreted. The protein resides in the host cell membrane. Effector that is involved in host plant infection. Contributes to virulence during the early infection stage, by inhibiting plant defense responses induced by both PAMP-triggered immunity (PTI) and effector-triggered immunity (ETI). In Phytophthora infestans (strain T30-4) (Potato late blight agent), this protein is RxLR effector protein PexRD21.